The following is a 176-amino-acid chain: Large ribosomal subunit protein uL22 (176 aa).

Residues 113–176 (VVESRPSKDQ…EISEAKGGSD (64 aa)) are disordered. Residues 136–152 (SKAAATAPAKKSSASKA) show a composition bias toward low complexity. A compositionally biased stretch (basic and acidic residues) spans 159 to 176 (TKAESKTSEISEAKGGSD).

This sequence belongs to the universal ribosomal protein uL22 family. In terms of assembly, part of the 50S ribosomal subunit.

Functionally, this protein binds specifically to 23S rRNA; its binding is stimulated by other ribosomal proteins, e.g. L4, L17, and L20. It is important during the early stages of 50S assembly. It makes multiple contacts with different domains of the 23S rRNA in the assembled 50S subunit and ribosome. In terms of biological role, the globular domain of the protein is located near the polypeptide exit tunnel on the outside of the subunit, while an extended beta-hairpin is found that lines the wall of the exit tunnel in the center of the 70S ribosome. In Mycobacterium ulcerans (strain Agy99), this protein is Large ribosomal subunit protein uL22.